The chain runs to 138 residues: Iron sulfur cluster assembly protein 1 (138 aa).

This sequence belongs to the NifU family. Component of the core Fe-S cluster (ISC) assembly machinery. The cofactor is [2Fe-2S] cluster.

The protein localises to the cytoplasm. Its pathway is cofactor biosynthesis; iron-sulfur cluster biosynthesis. Functionally, scaffold protein for the de novo synthesis of iron-sulfur (Fe-S) clusters within mitosomes, which is required for maturation of both [2Fe-2S] and [4Fe-4S] proteins. First, a [2Fe-2S] cluster is transiently assembled on the scaffold protein ISU1. In a second step, the cluster is released from ISU1, transferred to a glutaredoxin, followed by the formation of [2Fe-2S] proteins, the synthesis of [4Fe-4S] clusters and their target-specific insertion into the recipient apoproteins. Cluster assembly on ISU1 depends on the function of the cysteine desulfurase complex NFS1-ISD11, which serves as the sulfur donor for cluster synthesis, the iron-binding protein frataxin as the putative iron donor, and the electron transfer chain comprised of ferredoxin reductase and ferredoxin, which receive their electrons from NADH. The sequence is that of Iron sulfur cluster assembly protein 1 (ISU1) from Trachipleistophora hominis (Microsporidian parasite).